Consider the following 1074-residue polypeptide: Probable phospholipid-transporting ATPase tat-5 (1074 aa).

The segment at 1–26 is disordered; it reads MGKRKKNDESSSSSSQKPCVSSSSDD. Low complexity predominate over residues 10-26; sequence SSSSSSQKPCVSSSSDD. 4 consecutive transmembrane segments (helical) span residues 118-138, 143-163, 354-374, and 378-398; these read FVPIVLFQQFKFFLNLYFLLM, FIPAIQIGAPITYWGPLGFVL, LTKLLFCFVLVLSSVMVAMKG, and LWYRYLMRFILLFSYIIPISL. D442 serves as the catalytic 4-aspartylphosphate intermediate. Positions 442, 443, 444, 524, 570, 575, 594, 623, 624, 704, 705, 706, 786, and 792 each coordinate ATP. Residue D442 participates in Mg(2+) binding. Residue T444 coordinates Mg(2+). D813 contacts Mg(2+). ATP contacts are provided by N816 and D817. Position 817 (D817) interacts with Mg(2+). Helical transmembrane passes span 886–906, 954–974, 978–998, 1006–1026, and 1038–1058; these read AIFSCVFYFASVSLYQGVLMV, IWVLISLYQGAVIMYGALLVF, FIHVVSISFSALIVTELIMVA, WAMLLAQALSLGLYMISLILF, and WVFISKTTAITAVSCLPLYIV.

The protein belongs to the cation transport ATPase (P-type) (TC 3.A.3) family. Type IV subfamily. It depends on Mg(2+) as a cofactor.

The protein resides in the cell membrane. It catalyses the reaction ATP + H2O + phospholipidSide 1 = ADP + phosphate + phospholipidSide 2.. Its function is as follows. Plays a role in regulating membrane trafficking of cargo proteins during embryogenesis. Regulates snx-3 retromer-mediated endosomal sorting of mig-14, a transporter of Wnt egl-20 morphogen. Together with mon-2 and pad-1, may participate in the formation of endosomal carriers that direct mig-14 trafficking back to Golgi, away from lysosomal degradation. Required for Wnt egl-20 gradient formation along the anteroposterior body axis and migration of QL neuroblast descendants toward the posterior part. Maintains phosphatidylethanolamine (PE) asymmetry at the cell membrane and prevents the budding of ectosome vesicles that affect intercellular communication and morphogenesis. This chain is Probable phospholipid-transporting ATPase tat-5 (tat-5), found in Caenorhabditis elegans.